Reading from the N-terminus, the 234-residue chain is UPF0502 protein Bphyt_5265 (234 aa).

It belongs to the UPF0502 family.

The sequence is that of UPF0502 protein Bphyt_5265 from Paraburkholderia phytofirmans (strain DSM 17436 / LMG 22146 / PsJN) (Burkholderia phytofirmans).